A 122-amino-acid polypeptide reads, in one-letter code: MLPSMSLPSLXWMLLSCLMLLSQVQGEDSPADTPSARISCPKGSMAYASYCYALFITPKTWMGADMACQKRPSGHLVSVLSGAEASFVSSLIKNNLNALSDVWIGLHDPTEGLEPNAGGWEW.

Positions 1 to 26 (MLPSMSLPSLXWMLLSCLMLLSQVQG) are cleaved as a signal peptide. Positions 27-37 (EDSPADTPSAR) are excised as a propeptide. Positions 38 to 122 (ISCPKGSMAY…LEPNAGGWEW (85 aa)) constitute a C-type lectin domain. Residues C40 and C51 are joined by a disulfide bond.

Cleaved to give an A chain and a B chain joined by a disulfide bond. In pancreatic acinar cells.

Its subcellular location is the secreted. Its function is as follows. Might act as an inhibitor of spontaneous calcium carbonate precipitation. The polypeptide is Lithostathine (PTP) (Sus scrofa (Pig)).